Reading from the N-terminus, the 71-residue chain is Large ribosomal subunit protein bL31 (71 aa).

Residues Cys-16, Cys-18, Cys-36, and Cys-39 each contribute to the Zn(2+) site.

The protein belongs to the bacterial ribosomal protein bL31 family. Type A subfamily. In terms of assembly, part of the 50S ribosomal subunit. It depends on Zn(2+) as a cofactor.

Its function is as follows. Binds the 23S rRNA. In Pseudothermotoga lettingae (strain ATCC BAA-301 / DSM 14385 / NBRC 107922 / TMO) (Thermotoga lettingae), this protein is Large ribosomal subunit protein bL31.